The following is a 984-amino-acid chain: Glycine dehydrogenase (decarboxylating) (984 aa).

Lysine 702 carries the post-translational modification N6-(pyridoxal phosphate)lysine.

Belongs to the GcvP family. The glycine cleavage system is composed of four proteins: P, T, L and H. It depends on pyridoxal 5'-phosphate as a cofactor.

The catalysed reaction is N(6)-[(R)-lipoyl]-L-lysyl-[glycine-cleavage complex H protein] + glycine + H(+) = N(6)-[(R)-S(8)-aminomethyldihydrolipoyl]-L-lysyl-[glycine-cleavage complex H protein] + CO2. The glycine cleavage system catalyzes the degradation of glycine. The P protein binds the alpha-amino group of glycine through its pyridoxal phosphate cofactor; CO(2) is released and the remaining methylamine moiety is then transferred to the lipoamide cofactor of the H protein. The protein is Glycine dehydrogenase (decarboxylating) of Xanthomonas oryzae pv. oryzae (strain MAFF 311018).